Consider the following 200-residue polypeptide: Rho GDP-dissociation inhibitor 2 (200 aa).

A disordered region spans residues 1-40 (MTEKAPEPHVEEDDDELDGKLNYKPPPQKSLKELQEMDKD). Thr2 carries the post-translational modification N-acetylthreonine. Lys20 carries the N6-acetyllysine modification. At Tyr23 the chain carries Phosphotyrosine. 5 positions are modified to N6-acetyllysine: Lys24, Lys39, Lys46, Lys101, and Lys123. Over residues 30–40 (SLKELQEMDKD) the composition is skewed to basic and acidic residues. At Ser144 the chain carries Phosphoserine. Lys174 is modified (N6-acetyllysine).

Belongs to the Rho GDI family. As to quaternary structure, interacts with RHOA. Interacts with RAC1. Interacts with RAC2. Interacts with CDC42.

Its subcellular location is the cytoplasm. The protein localises to the cytosol. In terms of biological role, regulates the GDP/GTP exchange reaction of the Rho proteins by inhibiting the dissociation of GDP from them, and the subsequent binding of GTP to them. Regulates reorganization of the actin cytoskeleton mediated by Rho family members. The protein is Rho GDP-dissociation inhibitor 2 (ARHGDIB) of Bos taurus (Bovine).